The following is a 116-amino-acid chain: Large ribosomal subunit protein bL20c (116 aa).

Belongs to the bacterial ribosomal protein bL20 family.

The protein resides in the plastid. Its subcellular location is the chloroplast. In terms of biological role, binds directly to 23S ribosomal RNA and is necessary for the in vitro assembly process of the 50S ribosomal subunit. It is not involved in the protein synthesizing functions of that subunit. This chain is Large ribosomal subunit protein bL20c, found in Cyanidioschyzon merolae (strain NIES-3377 / 10D) (Unicellular red alga).